The chain runs to 261 residues: tRNA pseudouridine synthase A (261 aa).

Aspartate 51 functions as the Nucleophile in the catalytic mechanism. Substrate is bound at residue tyrosine 109.

This sequence belongs to the tRNA pseudouridine synthase TruA family. Homodimer.

The enzyme catalyses uridine(38/39/40) in tRNA = pseudouridine(38/39/40) in tRNA. Its function is as follows. Formation of pseudouridine at positions 38, 39 and 40 in the anticodon stem and loop of transfer RNAs. This Shewanella baltica (strain OS223) protein is tRNA pseudouridine synthase A.